Here is a 1110-residue protein sequence, read N- to C-terminus: Retinal guanylyl cyclase 1 (1110 aa).

An N-terminal signal peptide occupies residues 1-56 (MTACTFLAGGLRDPGLCGPTRWAPSPPGLPPIPPRPRLRLRPPLLLLLLLPRSVLS). Residues 57–467 (AVFTVGVLGP…PDTICNGGVE (411 aa)) lie on the Extracellular side of the membrane. N302 is a glycosylation site (N-linked (GlcNAc...) asparagine). Residues 468 to 492 (PSVVFIGFLLVVGMGLAGAFLAHYC) form a helical membrane-spanning segment. Residues 493-813 (RHRLLHIQMV…DRTFELFKSI (321 aa)) form the Protein kinase domain. The Cytoplasmic segment spans residues 493–1110 (RHRLLHIQMV…KARPGQFSGK (618 aa)). In terms of domain architecture, Guanylate cyclase spans 885–1015 (TLYFSDIVGF…DTVNTASAME (131 aa)). The disordered stretch occupies residues 1070 to 1110 (PIPKPPDLQPGASNHGISLHEIPPDRRQKLEKARPGQFSGK). Positions 1091–1103 (IPPDRRQKLEKAR) are enriched in basic and acidic residues.

The protein belongs to the adenylyl cyclase class-4/guanylyl cyclase family. As to quaternary structure, homodimer; requires homodimerization for guanylyl cyclase activity. Interacts (via C-terminus) with RD3 (via C-terminus); promotes the exit of GUCY2D from the endoplasmic reticulum and its trafficking to the photoreceptor outer segments. Interaction with RD3 negatively regulates GUCY2D guanylate cyclase activity. As to expression, expressed in the retina in rod outer segment.

It localises to the photoreceptor outer segment membrane. The protein localises to the endoplasmic reticulum membrane. The catalysed reaction is GTP = 3',5'-cyclic GMP + diphosphate. Activated by GUCA1A when free calcium ions concentration is low, and inhibited by GUCA1A when free calcium ions concentration is high. Negatively regulated by RD3; inhibits the basal and GUCA1A-stimulated guanylate cyclase activity. Functionally, catalyzes the synthesis of cyclic GMP (cGMP) in rods and cones of photoreceptors. Plays an essential role in phototransduction, by mediating cGMP replenishment. May also participate in the trafficking of membrane-asociated proteins to the photoreceptor outer segment membrane. This chain is Retinal guanylyl cyclase 1 (GUCY2D), found in Bos taurus (Bovine).